Here is a 778-residue protein sequence, read N- to C-terminus: E3 UFM1-protein ligase 1 homolog (778 aa).

The disordered stretch occupies residues 404-477 (NNLSTSHDAD…TVQQSAGNTR (74 aa)). Positions 445 to 457 (KSTKKHQRGRAAA) are enriched in basic residues.

Belongs to the UFL1 family.

Functionally, E3 UFM1-protein ligase that mediates ufmylation of target proteins. In Drosophila virilis (Fruit fly), this protein is E3 UFM1-protein ligase 1 homolog.